The primary structure comprises 94 residues: CRISPR-associated endoribonuclease Cas2 (94 aa).

Residue aspartate 11 coordinates Mg(2+).

It belongs to the CRISPR-associated endoribonuclease Cas2 protein family. As to quaternary structure, homodimer, forms a heterotetramer with a Cas1 homodimer. Mg(2+) is required as a cofactor.

Functionally, CRISPR (clustered regularly interspaced short palindromic repeat), is an adaptive immune system that provides protection against mobile genetic elements (viruses, transposable elements and conjugative plasmids). CRISPR clusters contain sequences complementary to antecedent mobile elements and target invading nucleic acids. CRISPR clusters are transcribed and processed into CRISPR RNA (crRNA). Functions as a ssRNA-specific endoribonuclease. Involved in the integration of spacer DNA into the CRISPR cassette. In Thermus thermophilus (strain ATCC 27634 / DSM 579 / HB8), this protein is CRISPR-associated endoribonuclease Cas2.